The primary structure comprises 199 residues: RNA pyrophosphohydrolase (199 aa).

One can recognise a Nudix hydrolase domain in the interval 6-154 (GYRPNVGIVL…KREVYELALS (149 aa)). The Nudix box signature appears at 38–59 (GGIQHGESPEQAMYRELHEEVG).

It belongs to the Nudix hydrolase family. RppH subfamily. It depends on a divalent metal cation as a cofactor.

In terms of biological role, accelerates the degradation of transcripts by removing pyrophosphate from the 5'-end of triphosphorylated RNA, leading to a more labile monophosphorylated state that can stimulate subsequent ribonuclease cleavage. This Polynucleobacter asymbioticus (strain DSM 18221 / CIP 109841 / QLW-P1DMWA-1) (Polynucleobacter necessarius subsp. asymbioticus) protein is RNA pyrophosphohydrolase.